The primary structure comprises 131 residues: Small ribosomal subunit protein uS8 (131 aa).

It belongs to the universal ribosomal protein uS8 family. In terms of assembly, part of the 30S ribosomal subunit. Contacts proteins S5 and S12.

One of the primary rRNA binding proteins, it binds directly to 16S rRNA central domain where it helps coordinate assembly of the platform of the 30S subunit. The chain is Small ribosomal subunit protein uS8 from Hydrogenovibrio crunogenus (strain DSM 25203 / XCL-2) (Thiomicrospira crunogena).